A 55-amino-acid chain; its full sequence is Large ribosomal subunit protein bL33A (55 aa).

Belongs to the bacterial ribosomal protein bL33 family.

The protein is Large ribosomal subunit protein bL33A of Rhodococcus jostii (strain RHA1).